A 245-amino-acid polypeptide reads, in one-letter code: rRNA adenine N-6-methyltransferase (245 aa).

6 residues coordinate S-adenosyl-L-methionine: Asn10, Leu12, Gly37, Glu58, Asp83, and Asn100.

Belongs to the class I-like SAM-binding methyltransferase superfamily. rRNA adenine N(6)-methyltransferase family.

It carries out the reaction adenosine(2085) in 23S rRNA + 2 S-adenosyl-L-methionine = N(6)-dimethyladenosine(2085) in 23S rRNA + 2 S-adenosyl-L-homocysteine + 2 H(+). Its function is as follows. This protein produces a dimethylation of the adenine residue at position 2085 in 23S rRNA, resulting in reduced affinity between ribosomes and macrolide-lincosamide-streptogramin B antibiotics. This Escherichia coli protein is rRNA adenine N-6-methyltransferase (ermBC).